The chain runs to 308 residues: Transcription factor zip-2 (308 aa).

Over residues 217 to 229 (QSSSSSTVETTIT) the composition is skewed to polar residues. The tract at residues 217–277 (QSSSSSTVET…RESKEERERL (61 aa)) is disordered. In terms of domain architecture, bZIP spans 242–305 (SSDYRHKRDK…EDYKRLVMMF (64 aa)). The interval 246–276 (RHKRDKNNLASQKSRQKRQAKIRESKEERER) is basic motif. Residues 266-277 (KIRESKEERERL) show a composition bias toward basic and acidic residues. The leucine-zipper stretch occupies residues 277–291 (LEKRKVQLQAMVLTL).

This sequence belongs to the bZIP family. C/EBP subfamily. In terms of tissue distribution, expressed in the pharynx and throughout the intestine.

The protein resides in the nucleus. Transcription factor that binds to the promoter and the enhancer regions of target genes. May act together with the bZIP transcription factor, cebp-2. Involved in responding to mitochondrial damage. Plays a role in the delay of age-associated mitochondrial fragmentation and muscle decline. Has a protective role in response to infection by the Gram-negative bacterium P.aeruginosa. Required to prevent P.aeruginosa ToxA-mediated lethality. Required for the activation of several infection response genes including irg-1 and irg-2 following P.aeruginosa infection; target gene activation may involve effects of the bacterial toxin, ToxA, and perhaps other toxins. The chain is Transcription factor zip-2 from Caenorhabditis elegans.